A 349-amino-acid chain; its full sequence is MSDFQREQRKNEHVEIAMAQSDAPQSDFDRVRFVHHSIPSINVDEVDLTSRTTDFDMTYPIYINAMTGGSEWTKQINEKLAVVARETGLAMAVGSTHAALRNPKMAESFSIARQTNPEGIIFSNVGADVPVDKAVEAVSLLDAQALQIHVNAPQELVMPEGNREFSTWLDNVAAIVQRVDVPVIIKEVGFGMSKELYKDLIDVGVTYVDVSGKGGTNFVTIENERRSNKDMDYLANWGQSTVESLLESSAYQDSLNVFASGGVRTPLDVVKSLALGAKAVGMSRPFLNQVENGGITTTIEYVESFIEHTKSIMTMLNARDISELKQSKFVFDHKLMSWIEQRGLDIHRG.

Residue 9–10 (RK) coordinates substrate. FMN contacts are provided by residues 65–67 (AMT), Ser-95, and Asn-124. 95 to 97 (STH) contacts substrate. Gln-154 is a substrate binding site. Position 155 (Glu-155) interacts with Mg(2+). FMN is bound by residues Lys-186, Ser-211, Thr-216, 262–264 (GVR), and 283–284 (SR).

The protein belongs to the IPP isomerase type 2 family. In terms of assembly, homooctamer. Dimer of tetramers. FMN serves as cofactor. Requires NADPH as cofactor. It depends on Mg(2+) as a cofactor.

The protein resides in the cytoplasm. The enzyme catalyses isopentenyl diphosphate = dimethylallyl diphosphate. Involved in the biosynthesis of isoprenoids. Catalyzes the 1,3-allylic rearrangement of the homoallylic substrate isopentenyl (IPP) to its allylic isomer, dimethylallyl diphosphate (DMAPP). The protein is Isopentenyl-diphosphate delta-isomerase of Staphylococcus haemolyticus (strain JCSC1435).